Here is a 184-residue protein sequence, read N- to C-terminus: GTP cyclohydrolase 1 (184 aa).

Cysteine 75, histidine 78, and cysteine 146 together coordinate Zn(2+).

This sequence belongs to the GTP cyclohydrolase I family. Homomer.

It carries out the reaction GTP + H2O = 7,8-dihydroneopterin 3'-triphosphate + formate + H(+). Its pathway is cofactor biosynthesis; 7,8-dihydroneopterin triphosphate biosynthesis; 7,8-dihydroneopterin triphosphate from GTP: step 1/1. This is GTP cyclohydrolase 1 from Streptococcus pneumoniae serotype 19F (strain G54).